The following is a 349-amino-acid chain: Neutral protease 2 homolog ACLA_052720 (349 aa).

The first 19 residues, 1–19, serve as a signal peptide directing secretion; the sequence is MQLTVLASAILALAQGALA. Positions 20–172 are excised as a propeptide; that stretch reads IPAKAPALDV…PAAINLLDRR (153 aa). 2 disulfide bridges follow: Cys178–Cys250 and Cys257–Cys275. Residue His300 coordinates Zn(2+). Glu301 is an active-site residue. Residues His304 and Asp315 each contribute to the Zn(2+) site.

Belongs to the peptidase M35 family. It depends on Zn(2+) as a cofactor.

The protein resides in the secreted. It catalyses the reaction Preferential cleavage of bonds with hydrophobic residues in P1'. Also 3-Asn-|-Gln-4 and 8-Gly-|-Ser-9 bonds in insulin B chain.. Secreted metalloproteinase that allows assimilation of proteinaceous substrates. Shows high activities on basic nuclear substrates such as histone and protamine. The polypeptide is Neutral protease 2 homolog ACLA_052720 (Aspergillus clavatus (strain ATCC 1007 / CBS 513.65 / DSM 816 / NCTC 3887 / NRRL 1 / QM 1276 / 107)).